Consider the following 639-residue polypeptide: MKKLFSYKLSFFVLAVILFWAKTYLSYKTEFNLGVKGTTQEILLIFNPFSSAVFFLGLALLAKGRKSAIIMLIIDFLMTFVLYANILFYRFFDDFLTFPNIKQSGNVGNMGDGIFSIMAGHDIFYFLDIIILIAVLIWRPELKEYKMKKRFASLVILSGIALFFINLHYAEKDRPQLLTRTFDRNYIVKYLGLYNYTIYDGVQTAQTETQRAYASSDDLTSVENYTTSHYAKPNAEYFGSAKGKNIIKIHLESFQSFLIDYKLNGEEVTPFLNKLAHGGEDVTYFDNFFHQTGQGKTSDAELTMDNSIFGLPEGSAFVTKGENTYQSLPAILDQKEGYTSAVLHGDYKSFWNRDQIYKHIGYDKFFDASTYDMSDENVINMGLKDKPFFTESIPKLESLKQPFYAHLITLTNHYPFNLDEKDASLKKATTGDNTVDSYFQTARYLDEALEQFFKELKEAGLYDNSVIMIYGDHNGISENHNRAMKEILGKEITDYQNAQNQRVPLMIRVPGKKGGVNHTYGGEIDVMPTLLHLEGIDSQKYINFGTDLFSKDHDDTVAFRNGDFVTPKYTSVDNIIYDTKTGEKLKANEETKNLKTRVNQQLSLSDSVLYKDLLRFHKLNDFKAVDPSDYHYGKEKEIK.

Residues 1–3 (MKK) lie on the Cytoplasmic side of the membrane. The helical transmembrane segment at 4–24 (LFSYKLSFFVLAVILFWAKTY) threads the bilayer. Residues 25-41 (LSYKTEFNLGVKGTTQE) are Extracellular-facing. A helical membrane pass occupies residues 42-62 (ILLIFNPFSSAVFFLGLALLA). Over 63–67 (KGRKS) the chain is Cytoplasmic. Residues 68–88 (AIIMLIIDFLMTFVLYANILF) form a helical membrane-spanning segment. The Extracellular segment spans residues 89–116 (YRFFDDFLTFPNIKQSGNVGNMGDGIFS). A helical transmembrane segment spans residues 117–137 (IMAGHDIFYFLDIIILIAVLI). The Cytoplasmic portion of the chain corresponds to 138–150 (WRPELKEYKMKKR). The helical transmembrane segment at 151–171 (FASLVILSGIALFFINLHYAE) threads the bilayer. Residues 172-639 (KDRPQLLTRT…YHYGKEKEIK (468 aa)) are Extracellular-facing. Mn(2+) is bound by residues E252 and T297. T297 is an active-site residue. H413 contacts substrate. Positions 472 and 473 each coordinate Mn(2+).

The protein belongs to the LTA synthase family. Proteolytically cleaved by the type I signal peptidases SipT and SipV.

It localises to the cell membrane. The protein resides in the secreted. The protein operates within cell wall biogenesis; lipoteichoic acid biosynthesis. Functionally, catalyzes the polymerization of lipoteichoic acid (LTA) polyglycerol phosphate, a reaction that presumably uses phosphatidylglycerol (PG) as substrate. The chain is Lipoteichoic acid synthase 1 (ltaS1) from Bacillus subtilis (strain 168).